Consider the following 317-residue polypeptide: Transaldolase (317 aa).

K132 acts as the Schiff-base intermediate with substrate in catalysis.

The protein belongs to the transaldolase family. Type 1 subfamily. Homodimer.

It localises to the cytoplasm. It carries out the reaction D-sedoheptulose 7-phosphate + D-glyceraldehyde 3-phosphate = D-erythrose 4-phosphate + beta-D-fructose 6-phosphate. It functions in the pathway carbohydrate degradation; pentose phosphate pathway; D-glyceraldehyde 3-phosphate and beta-D-fructose 6-phosphate from D-ribose 5-phosphate and D-xylulose 5-phosphate (non-oxidative stage): step 2/3. Its function is as follows. Transaldolase is important for the balance of metabolites in the pentose-phosphate pathway. The polypeptide is Transaldolase (talB) (Escherichia coli O104:H4 (strain 2009EL-2071)).